The chain runs to 387 residues: Polyphosphate kinase (387 aa).

Residues Arg-347 and Arg-377 each contribute to the Mg(2+) site.

The protein belongs to the polyphosphate kinase 1 (PPK1) family. Mg(2+) is required as a cofactor. In terms of processing, an intermediate of this reaction is the autophosphorylated ppk in which a phosphate is covalently linked to a histidine residue through a N-P bond.

The catalysed reaction is [phosphate](n) + ATP = [phosphate](n+1) + ADP. Its function is as follows. Catalyzes the reversible transfer of the terminal phosphate of ATP to form a long-chain polyphosphate (polyP). In Aphanizomenon baltica, this protein is Polyphosphate kinase (ppk).